Consider the following 292-residue polypeptide: Acetylglutamate kinase (292 aa).

Substrate is bound by residues 72-73 (GG), R94, and N187.

The protein belongs to the acetylglutamate kinase family. ArgB subfamily.

The protein resides in the cytoplasm. It catalyses the reaction N-acetyl-L-glutamate + ATP = N-acetyl-L-glutamyl 5-phosphate + ADP. It functions in the pathway amino-acid biosynthesis; L-arginine biosynthesis; N(2)-acetyl-L-ornithine from L-glutamate: step 2/4. In terms of biological role, catalyzes the ATP-dependent phosphorylation of N-acetyl-L-glutamate. This Trichodesmium erythraeum (strain IMS101) protein is Acetylglutamate kinase.